The sequence spans 143 residues: MIRKSKKITKMRGSRTCGYGEAKKHRGAGHRGGRGNAGHQKHKWLSVCKFNPDYFGKYGFNRNPGLIKQLETINIGELEEYILKYKDAFQVEDGKVVVDATEIGYEKVLGKGRISTAMVVKAVEFSEGAKEKIEAAGGEFVEL.

Basic residues-rich tracts occupy residues 1–13 and 23–38; these read MIRK…KMRG and KKHR…GNAG. The disordered stretch occupies residues 1 to 38; the sequence is MIRKSKKITKMRGSRTCGYGEAKKHRGAGHRGGRGNAG.

This sequence belongs to the universal ribosomal protein uL15 family. In terms of assembly, part of the 50S ribosomal subunit.

Functionally, binds to the 23S rRNA. The polypeptide is Large ribosomal subunit protein uL15 (Methanococcus maripaludis (strain C7 / ATCC BAA-1331)).